The primary structure comprises 132 residues: Hemoglobin subunit beta-1 (132 aa).

Residues 1 to 132 enclose the Globin domain; it reads WSKIDIDVCG…VVSALGRQYH (132 aa). Residues H49 and H78 each coordinate heme b.

Belongs to the globin family. Hb 1 is a heterotetramer of two alpha-1 and two beta-1 chains. Hb 2 is a heterotetramer of two alpha-2 and two beta-1 chains. As to expression, red blood cells.

In terms of biological role, involved in oxygen transport from gills to the various peripheral tissues. The polypeptide is Hemoglobin subunit beta-1 (hbb1) (Arctogadus glacialis (Arctic cod)).